The sequence spans 373 residues: Decapping nuclease RAI1 (373 aa).

A divalent metal cation is bound at residue Glu-136. Cys-168 and Glu-185 together coordinate substrate. 3 residues coordinate a divalent metal cation: Asp-187, Glu-205, and Leu-206. Positions 207 and 231 each coordinate substrate. The interval 340–373 (KDKPPGFEPSDAADAEPSMAEEPVPETASASGAY) is disordered.

The protein belongs to the DXO/Dom3Z family. As to quaternary structure, interacts with RAT1; the interaction is direct, stabilizes RAT1 protein structure and stimulates its exoribonuclease activity. The interaction also stimulates RAI1 pyrophosphohydrolase activity, probably by recruiting it to mRNA substrates. A divalent metal cation is required as a cofactor.

Its subcellular location is the nucleus. It catalyses the reaction a 5'-end NAD(+)-phospho-ribonucleoside in mRNA + H2O = a 5'-end phospho-ribonucleoside in mRNA + NAD(+) + H(+). The catalysed reaction is a 5'-end (N(7)-methyl 5'-triphosphoguanosine)-ribonucleoside-ribonucleotide in mRNA + H2O = a (N(7)-methyl 5'-triphosphoguanosine)-nucleoside + a 5'-end phospho-ribonucleoside in mRNA + H(+). The enzyme catalyses a 5'-end triphospho-ribonucleoside in mRNA + H2O = a 5'-end phospho-ribonucleoside in mRNA + diphosphate + H(+). In terms of biological role, decapping enzyme for NAD-capped RNAs: specifically hydrolyzes the nicotinamide adenine dinucleotide (NAD) cap from a subset of RNAs by removing the entire NAD moiety from the 5'-end of an NAD-capped RNA. The NAD-cap is present at the 5'-end of some RNAs and snoRNAs. In contrast to the canonical 5'-end N7 methylguanosine (m7G) cap, the NAD cap promotes mRNA decay. Also acts as a non-canonical decapping enzyme that removes the entire cap structure of m7G capped or incompletely capped RNAs. Has decapping activity toward incomplete 5'-end m7G cap mRNAs such as unmethylated 5'-end-capped RNA (cap0), while it has no activity toward 2'-O-ribose methylated m7G cap (cap1). Also possesses RNA 5'-pyrophosphohydrolase activity by hydrolyzing the 5'-end triphosphate to release pyrophosphates. Stimulates exoribonuclease activity of Rat1, allowing it to degrade RNAs with stable secondary structure more effectively. The polypeptide is Decapping nuclease RAI1 (RAI1) (Chaetomium globosum (strain ATCC 6205 / CBS 148.51 / DSM 1962 / NBRC 6347 / NRRL 1970) (Soil fungus)).